Reading from the N-terminus, the 117-residue chain is Large ribosomal subunit protein eL8 (117 aa).

Belongs to the eukaryotic ribosomal protein eL8 family. As to quaternary structure, part of the 50S ribosomal subunit. Probably part of the RNase P complex.

The protein localises to the cytoplasm. Multifunctional RNA-binding protein that recognizes the K-turn motif in ribosomal RNA, the RNA component of RNase P, box H/ACA, box C/D and box C'/D' sRNAs. In Methanococcus aeolicus (strain ATCC BAA-1280 / DSM 17508 / OCM 812 / Nankai-3), this protein is Large ribosomal subunit protein eL8.